A 226-amino-acid chain; its full sequence is Ribonuclease 3 (226 aa).

The 123-residue stretch at 7-129 (LPRLCRTLGY…IIGAIYLDSD (123 aa)) folds into the RNase III domain. Residue Glu-42 coordinates Mg(2+). Asp-46 is an active-site residue. 2 residues coordinate Mg(2+): Asp-115 and Glu-118. The active site involves Glu-118. The DRBM domain occupies 156–226 (DAKTLLQEYL…AAQVLELLKK (71 aa)).

It belongs to the ribonuclease III family. In terms of assembly, homodimer. Mg(2+) is required as a cofactor.

The protein localises to the cytoplasm. It carries out the reaction Endonucleolytic cleavage to 5'-phosphomonoester.. Its function is as follows. Digests double-stranded RNA. Involved in the processing of primary rRNA transcript to yield the immediate precursors to the large and small rRNAs (23S and 16S). Processes some mRNAs, and tRNAs when they are encoded in the rRNA operon. Processes pre-crRNA and tracrRNA of type II CRISPR loci if present in the organism. In Shewanella oneidensis (strain ATCC 700550 / JCM 31522 / CIP 106686 / LMG 19005 / NCIMB 14063 / MR-1), this protein is Ribonuclease 3.